Reading from the N-terminus, the 411-residue chain is LIM domain-binding protein 1 (411 aa).

Position 2 is an N-acetylserine (Ser-2). A Phosphothreonine modification is found at Thr-61. Phosphoserine is present on residues Ser-265 and Ser-302. 2 disordered regions span residues 283-330 and 367-411; these read APPA…TFAL and DAAN…QASQ. The span at 302 to 318 shows a compositional bias: low complexity; it reads SGGSTMSSGGGNTNNSN. In terms of domain architecture, LIM interaction domain (LID) spans 336–375; the sequence is DVMVVGEPTLMGGEFGDEDERLITRLENTQFDAANGIDDE.

Belongs to the LDB family. In terms of assembly, interacts with ESR1. Forms homodimers and heterodimers. Interacts with and activates LHX1/LIM1. Interacts with the LIM domains of ISL1 and LMO2. Can assemble in a complex with LMO2 and TAL1/SCL but does not interact with TAL1/SCL directly. Strongly interacts with the LIM2 domain of LMX1A and more weakly with the LIM1 domain. Homodimerization is not required for, and does not effect, LMX1A-binding. Component of a nuclear TAL-1 complex composed at least of CBFA2T3, LDB1, TAL1 and TCF3. Interacts with LHX6 and LHX9. At neuronal promoters, forms a complex with LHX3 involved in the specification of interneurons, in motor neurons, it is displaced by ISL1 to form a ternary complex in which ISL1 contacts both LHX3 and LDB1. Interacts with SLK; leading to negatively regulate SLK kinase activity. Interacts with YWHAZ. Interacts with PRDM1/BLIMP1. Interacts with LMO4. Interacts with RLIM/RNF12; the interaction inhibits the ubiquitination of LMO proteins. Post-translationally, ubiquitinated by RLIM/RNF12, leading to its degradation by the proteasome. Expressed in a wide range of adult tissues including brain, heart, skeletal muscle, colon, thymus, spleen, kidney, liver, small intestine, lung and peripheral blood leukocytes.

It is found in the nucleus. Functionally, binds to the LIM domain of a wide variety of LIM domain-containing transcription factors. May regulate the transcriptional activity of LIM-containing proteins by determining specific partner interactions. Plays a role in the development of interneurons and motor neurons in cooperation with LHX3 and ISL1. Acts synergistically with LHX1/LIM1 in axis formation and activation of gene expression. Acts with LMO2 in the regulation of red blood cell development, maintaining erythroid precursors in an immature state. In Homo sapiens (Human), this protein is LIM domain-binding protein 1 (LDB1).